The chain runs to 351 residues: Regulator of V-ATPase in vacuolar membrane protein 2 (351 aa).

In terms of assembly, component of the RAVE complex composed of RAV1, RAV2 and CBF3D/SKP1. Within the complex, it interacts directly with RAV1 and CBF3D. Interacts with the V-ATPase V1 subunits VMA1, VMA2 and VMA8.

Its subcellular location is the cytoplasm. The protein resides in the early endosome membrane. Functionally, component of the RAVE complex, which is required for stable assembly of the vacuolar ATPase complex V-ATPase under many conditions. May be required for transport between the early endosome and the late endosome/prevacuolar compartment (PVC). The chain is Regulator of V-ATPase in vacuolar membrane protein 2 (RAV2) from Saccharomyces cerevisiae (strain ATCC 204508 / S288c) (Baker's yeast).